Reading from the N-terminus, the 361-residue chain is Probable G-protein coupled receptor 25 (361 aa).

The Extracellular segment spans residues 1-39 (MAPTEPWSPSPGSAPWDYSGLDGLEELELCPAGDLPYGY). Residues 40–60 (VYIPALYLAAFAVGLLGNAFV) traverse the membrane as a helical segment. Residues 61-75 (VWLLAGRRGPRRLVD) are Cytoplasmic-facing. A helical transmembrane segment spans residues 76–96 (TFVLHLAAADLGFVLTLPLWA). At 97–126 (AAAALGGRWPFGDGLCKLSSFALAGTRCAG) the chain is on the extracellular side. The helical transmembrane segment at 127 to 147 (ALLLAGMSVDRYLAVVKLLEA) threads the bilayer. Over 148 to 155 (RPLRTPRC) the chain is Cytoplasmic. Residues 156-176 (ALASCCGVWAVALLAGLPSLV) traverse the membrane as a helical segment. The Extracellular segment spans residues 177–200 (YRGLQPLPGGQDSQCGEEPSHAFQ). A helical membrane pass occupies residues 201–220 (GLSLLLLLLTFVLPLVVTLF). At 221 to 242 (CYCRISRRLRRPPHVGRARRNS) the chain is on the cytoplasmic side. Residues 243-263 (LRIIFAIESTFVGSWLPFSAL) form a helical membrane-spanning segment. Residues 264 to 289 (RAVFHLARLGALPLPCPLLLALRWGL) lie on the Extracellular side of the membrane. A helical membrane pass occupies residues 290 to 310 (TIATCLAFVNSCANPLIYLLL). The Cytoplasmic segment spans residues 311 to 361 (DRSFRARALDGACGRTGRLARRISSASSLSRDDSSVFRCRAQAANTASASW).

It belongs to the G-protein coupled receptor 1 family.

It localises to the cell membrane. Its function is as follows. Orphan receptor. The chain is Probable G-protein coupled receptor 25 (GPR25) from Homo sapiens (Human).